The following is a 149-amino-acid chain: Transthyretin (149 aa).

Residues 1-20 form the signal peptide; sequence MAFHSLLLLCLAGLLFVSEA. Position 32 is a sulfocysteine (C32). K37 lines the L-thyroxine pocket. The residue at position 64 (E64) is a 4-carboxyglutamate. Residues E76 and S139 each contribute to the L-thyroxine site.

The protein belongs to the transthyretin family. In terms of assembly, homotetramer. Dimer of dimers. In the homotetramer, subunits assemble around a central channel that can accommodate two ligand molecules. Interacts with RBP4. Post-translationally, sulfonation of the reactive cysteine Cys-32 enhances the stability of the native conformation of TTR, avoiding misassembly of the protein leading to amyloid formation. Detected in plasma (at protein level). Detected in liver.

It is found in the secreted. Functionally, thyroid hormone-binding protein. Probably transports thyroxine from the bloodstream to the brain. This is Transthyretin (TTR) from Petaurus breviceps (Australian sugar glider).